The chain runs to 104 residues: Large ribosomal subunit protein bL21 (104 aa).

The protein belongs to the bacterial ribosomal protein bL21 family. Part of the 50S ribosomal subunit. Contacts protein L20.

Its function is as follows. This protein binds to 23S rRNA in the presence of protein L20. This chain is Large ribosomal subunit protein bL21, found in Caldanaerobacter subterraneus subsp. tengcongensis (strain DSM 15242 / JCM 11007 / NBRC 100824 / MB4) (Thermoanaerobacter tengcongensis).